A 490-amino-acid chain; its full sequence is N-succinylglutamate 5-semialdehyde dehydrogenase (490 aa).

223-228 (GSAGTG) provides a ligand contact to NAD(+). Residues Glu246 and Cys280 contribute to the active site.

This sequence belongs to the aldehyde dehydrogenase family. AstD subfamily.

The catalysed reaction is N-succinyl-L-glutamate 5-semialdehyde + NAD(+) + H2O = N-succinyl-L-glutamate + NADH + 2 H(+). Its pathway is amino-acid degradation; L-arginine degradation via AST pathway; L-glutamate and succinate from L-arginine: step 4/5. Catalyzes the NAD-dependent reduction of succinylglutamate semialdehyde into succinylglutamate. This chain is N-succinylglutamate 5-semialdehyde dehydrogenase, found in Serratia proteamaculans (strain 568).